The sequence spans 199 residues: Probable chemoreceptor glutamine deamidase CheD (199 aa).

This sequence belongs to the CheD family.

The catalysed reaction is L-glutaminyl-[protein] + H2O = L-glutamyl-[protein] + NH4(+). Its function is as follows. Probably deamidates glutamine residues to glutamate on methyl-accepting chemotaxis receptors (MCPs), playing an important role in chemotaxis. The polypeptide is Probable chemoreceptor glutamine deamidase CheD (Nitratidesulfovibrio vulgaris (strain ATCC 29579 / DSM 644 / CCUG 34227 / NCIMB 8303 / VKM B-1760 / Hildenborough) (Desulfovibrio vulgaris)).